A 512-amino-acid polypeptide reads, in one-letter code: Threonine synthase (512 aa).

Lysine 121 is subject to N6-(pyridoxal phosphate)lysine. Residues glycine 273, asparagine 274, phenylalanine 275, aspartate 277, and threonine 445 each coordinate pyridoxal 5'-phosphate.

It belongs to the threonine synthase family. The cofactor is pyridoxal 5'-phosphate.

The catalysed reaction is O-phospho-L-homoserine + H2O = L-threonine + phosphate. Its pathway is amino-acid biosynthesis; L-threonine biosynthesis; L-threonine from L-aspartate: step 5/5. Its function is as follows. Catalyzes the gamma-elimination of phosphate from L-phosphohomoserine and the beta-addition of water to produce L-threonine. In Eremothecium gossypii (strain ATCC 10895 / CBS 109.51 / FGSC 9923 / NRRL Y-1056) (Yeast), this protein is Threonine synthase (THR4).